A 327-amino-acid chain; its full sequence is Ferrochelatase 2 (327 aa).

Histidine 201 and glutamate 282 together coordinate Fe cation.

Belongs to the ferrochelatase family.

It localises to the cytoplasm. It catalyses the reaction heme b + 2 H(+) = protoporphyrin IX + Fe(2+). Its pathway is porphyrin-containing compound metabolism; protoheme biosynthesis; protoheme from protoporphyrin-IX: step 1/1. Catalyzes the ferrous insertion into protoporphyrin IX. This chain is Ferrochelatase 2, found in Shewanella oneidensis (strain ATCC 700550 / JCM 31522 / CIP 106686 / LMG 19005 / NCIMB 14063 / MR-1).